The following is a 125-amino-acid chain: Calcitonin receptor-stimulating peptide 3 (125 aa).

The first 25 residues, 1–25, serve as a signal peptide directing secretion; sequence MGFWKFPPFLILSILVLYQAGMLHA. Positions 26-79 are excised as a propeptide; that stretch reads APFRMALGSSFDSATLTEEEMSLLLVAMVKDYVQMKATVLEQETEDFSITTQER. Cysteine 81 and cysteine 86 are joined by a disulfide. Leucine 116 bears the Leucine amide mark. Residues 122–125 constitute a propeptide that is removed on maturation; the sequence is QPQA.

Belongs to the calcitonin family. Mainly expressed in the thyroid gland and CNS. Found in the nerve cells of cerebrum, hippocampus, hypothalamus, pons/midbrain and thalamus.

The protein resides in the secreted. In Sus scrofa (Pig), this protein is Calcitonin receptor-stimulating peptide 3 (CRSP3).